The primary structure comprises 429 residues: Sex determination protein fox-1 (429 aa).

Residues 156–180 (ATTAGSTNGSAAVTQPDPSTSSGPD) are compositionally biased toward low complexity. The segment at 156 to 188 (ATTAGSTNGSAAVTQPDPSTSSGPDGPKRLHVS) is disordered. The region spanning 183–259 (KRLHVSNIPF…RKIEVNCATA (77 aa)) is the RRM domain.

Interacts with sup-12. In terms of tissue distribution, in males and hermaphrodites expressed in a subset of cells in the head and tail. Expressed in the pharynx, intestine and in muscles from the vulva and body wall.

Its subcellular location is the nucleus. In terms of biological role, RNA-binding protein that regulates tissue-specific alternative splicing events by binding to 5'-UGCAUG-3' and 5'-GCACG-3' elements. Also binds to poly(A), poly(G), poly(C), or poly(U) stretches of RNA. Plays a role in the sex determination pathway and X chromosome dosage compensation, and together with sex-1 is involved in making the distinction between one and two X-chromosomes. Binds to 5'-GCAUG-3' and 5'-GCACG-3' elements in intron 6 of the pre-mRNA of the sex-determining factor xol-1 to promote its alternative splicing and together with sex-1 negatively regulates the expression of xol-1 to promote hermaphrodite development. Negatively regulates the expression of the active isoform of xol-1 (isoform b) by promoting intron 6 retention and the deletion of exon 7 coding sequences in hermaphrodite embryos. Furthermore, binding to the pre-mRNA of xol-1 can also direct the use of an alternative 3' splice site enabling the xol-1 transcript to be trans-spliced to unrelated genes on chromosome 2, which also leads to xol-1 exon 7 deletion. Does not seem to regulate the retention of introns 1 to 5 of xol-1 pre-mRNA. Plays a role in the association of the dosage compensation complex proteins dpy-27 and sdc-3 with the hermaphrodite X chromosomes. Binds to 5'-UGCAUG-3' elements in intron 7 of the pre-mRNA of unc-32 to promote its alternative splicing in neuronal tissues. Binds to 5'-UGCAUG-3' elements in intron 4 of the pre-mRNA of egl-15 to promote its alternative splicing in body wall muscle tissues. Promotes binding of RNA-binding protein sup-12 to target RNA. Plays a role in male mating behavior. The polypeptide is Sex determination protein fox-1 (Caenorhabditis elegans).